The chain runs to 231 residues: 2-C-methyl-D-erythritol 4-phosphate cytidylyltransferase (231 aa).

This sequence belongs to the IspD/TarI cytidylyltransferase family. IspD subfamily.

The enzyme catalyses 2-C-methyl-D-erythritol 4-phosphate + CTP + H(+) = 4-CDP-2-C-methyl-D-erythritol + diphosphate. It functions in the pathway isoprenoid biosynthesis; isopentenyl diphosphate biosynthesis via DXP pathway; isopentenyl diphosphate from 1-deoxy-D-xylulose 5-phosphate: step 2/6. In terms of biological role, catalyzes the formation of 4-diphosphocytidyl-2-C-methyl-D-erythritol from CTP and 2-C-methyl-D-erythritol 4-phosphate (MEP). This Clostridium novyi (strain NT) protein is 2-C-methyl-D-erythritol 4-phosphate cytidylyltransferase.